Reading from the N-terminus, the 159-residue chain is NAD(P)H-quinone oxidoreductase subunit J, chloroplastic (159 aa).

The protein belongs to the complex I 30 kDa subunit family. As to quaternary structure, NDH is composed of at least 16 different subunits, 5 of which are encoded in the nucleus.

The protein resides in the plastid. It is found in the chloroplast thylakoid membrane. The catalysed reaction is a plastoquinone + NADH + (n+1) H(+)(in) = a plastoquinol + NAD(+) + n H(+)(out). It carries out the reaction a plastoquinone + NADPH + (n+1) H(+)(in) = a plastoquinol + NADP(+) + n H(+)(out). Functionally, NDH shuttles electrons from NAD(P)H:plastoquinone, via FMN and iron-sulfur (Fe-S) centers, to quinones in the photosynthetic chain and possibly in a chloroplast respiratory chain. The immediate electron acceptor for the enzyme in this species is believed to be plastoquinone. Couples the redox reaction to proton translocation, and thus conserves the redox energy in a proton gradient. The protein is NAD(P)H-quinone oxidoreductase subunit J, chloroplastic of Triticum aestivum (Wheat).